Consider the following 207-residue polypeptide: MYYVIASLLGYIFGCIHGSQIVGKLKGINIKDGGVKNAGASNTTILLGWKYGIVVALIDIFKATAAIFLLLILLQGNAIPTQEQHIYIYLTALFVIIGHNYPITMQFSGGKGTASLVGALIAIDWRIALIGIGVLILFTIATDYLAVGVLSMYISFLITTYYIFGLAPFFIVVGLSVLSIYKHIENYKRIIGKEETKLSSMFGKKAS.

The next 5 helical transmembrane spans lie at 3 to 23 (YVIASLLGYIFGCIHGSQIVG), 53 to 73 (IVVALIDIFKATAAIFLLLIL), 85 to 105 (HIYIYLTALFVIIGHNYPITM), 127 to 147 (IALIGIGVLILFTIATDYLAV), and 154 to 174 (ISFLITTYYIFGLAPFFIVVG).

Belongs to the PlsY family. Probably interacts with PlsX.

It is found in the cell membrane. The enzyme catalyses an acyl phosphate + sn-glycerol 3-phosphate = a 1-acyl-sn-glycero-3-phosphate + phosphate. It participates in lipid metabolism; phospholipid metabolism. Its function is as follows. Catalyzes the transfer of an acyl group from acyl-phosphate (acyl-PO(4)) to glycerol-3-phosphate (G3P) to form lysophosphatidic acid (LPA). This enzyme utilizes acyl-phosphate as fatty acyl donor, but not acyl-CoA or acyl-ACP. This is Glycerol-3-phosphate acyltransferase 1 from Oceanobacillus iheyensis (strain DSM 14371 / CIP 107618 / JCM 11309 / KCTC 3954 / HTE831).